A 167-amino-acid chain; its full sequence is Gametocyte-specific factor 1 (167 aa).

Ser8 is modified (phosphoserine). 2 CHHC U11-48K-type zinc fingers span residues 14–41 (LLQC…RKNH) and 48–75 (LATC…DDKS). Residues Cys17, His23, His33, Cys37, Cys51, His57, His67, and Cys71 each coordinate Zn(2+).

This sequence belongs to the UPF0224 (FAM112) family. Expressed abundantly in adult testis, at moderate levels in unfertilized eggs and ovaries and weakly in embryonic stem cells.

It localises to the cytoplasm. Functionally, required for spermatogenesis and is involved in the suppression of retrotransposon transcription in male germ cells. This chain is Gametocyte-specific factor 1, found in Mus musculus (Mouse).